Reading from the N-terminus, the 141-residue chain is Hemoglobin subunit alpha-A (141 aa).

The region spanning 1–141 is the Globin domain; sequence MLSASDKANV…VGLVLTAKYR (141 aa). Histidine 58 provides a ligand contact to O2. Histidine 87 contacts heme b.

The protein belongs to the globin family. There are three forms of hemoglobin in Sphenodon: A, A' and D. Hb A is a tetramer of two alpha-A and two beta-1, Hb A' is a tetramer of two alpha-a and two beta-2, Hb D is a tetramer of two alpha-D and two beta-2. As to expression, red blood cells.

Its function is as follows. Involved in oxygen transport from the lung to the various peripheral tissues. This Sphenodon punctatus (Tuatara) protein is Hemoglobin subunit alpha-A (HBAA).